A 646-amino-acid chain; its full sequence is uncharacterized protein (646 aa).

Helical transmembrane passes span 20–40 (AYFL…SFIF), 54–74 (LVKT…IFFI), 115–135 (LAAI…FFMI), 154–174 (AFVM…ILSL), 203–223 (TVLS…ANAI), 232–252 (ILIL…VAFF), 285–305 (LFLT…IYMF), 523–543 (GVAL…IVQG), 582–602 (IGFL…FAYA), and 613–633 (FLEA…YYIV).

Belongs to the ABC-4 integral membrane protein family.

The protein localises to the cell membrane. This is an uncharacterized protein from Bacillus subtilis (strain 168).